The chain runs to 395 residues: Nucleoside diphosphate kinase homolog 7 (395 aa).

In terms of domain architecture, DM10 spans 22–110; that stretch reads QSERFAFIAE…YTARQLGSRK (89 aa).

The protein belongs to the NDK family. As to quaternary structure, component of sperm flagellar doublet microtubules. Component of the gamma-tubulin ring complex.

Its subcellular location is the cytoplasm. The protein localises to the cytoskeleton. It localises to the microtubule organizing center. It is found in the centrosome. The protein resides in the nucleus. Its subcellular location is the spindle. The protein localises to the cilium axoneme. It localises to the flagellum axoneme. It is found in the cell projection. The protein resides in the cilium. Its function is as follows. Possesses an intrinsic kinase activity. Displays 3'-5' exonuclease activity with a preference for single-stranded DNA. Does not seem to have nucleoside diphosphate kinase activity. Functional component of the gamma-tubulin ring complex, implicated in the regulation of the microtubule-nucleating activity of the gamma-tubulin ring complex in centrosomes, in a kinase activity-dependent manner. Part of the dynein-decorated doublet microtubules (DMTs) in cilia axoneme, which is required for motile cilia beating. This chain is Nucleoside diphosphate kinase homolog 7, found in Mus musculus (Mouse).